We begin with the raw amino-acid sequence, 589 residues long: Phenylalanine--tRNA ligase beta subunit (589 aa).

Residues 302–379 enclose the B5 domain; that stretch reads LAYRKEMVRA…IAYGYSNIQM (78 aa). Residues D357, D363, E366, and D367 each coordinate Mg(2+).

The protein belongs to the phenylalanyl-tRNA synthetase beta subunit family. Type 2 subfamily. Heterotetramer; dimer of two heterodimers formed by FARSA and FARSB. It depends on Mg(2+) as a cofactor.

The protein localises to the cytoplasm. It carries out the reaction tRNA(Phe) + L-phenylalanine + ATP = L-phenylalanyl-tRNA(Phe) + AMP + diphosphate + H(+). The protein is Phenylalanine--tRNA ligase beta subunit (FARSB) of Pongo abelii (Sumatran orangutan).